The primary structure comprises 213 residues: 3,4-dihydroxy-2-butanone 4-phosphate synthase (213 aa).

D-ribulose 5-phosphate-binding positions include 37 to 38 (RE), Asp42, 150 to 154 (RPGHT), and Glu174. Glu38 contributes to the Mg(2+) binding site. His153 serves as a coordination point for Mg(2+).

The protein belongs to the DHBP synthase family. Homodimer. Mg(2+) serves as cofactor. Requires Mn(2+) as cofactor.

The catalysed reaction is D-ribulose 5-phosphate = (2S)-2-hydroxy-3-oxobutyl phosphate + formate + H(+). The protein operates within cofactor biosynthesis; riboflavin biosynthesis; 2-hydroxy-3-oxobutyl phosphate from D-ribulose 5-phosphate: step 1/1. Its function is as follows. Catalyzes the conversion of D-ribulose 5-phosphate to formate and 3,4-dihydroxy-2-butanone 4-phosphate. This Clostridium botulinum (strain ATCC 19397 / Type A) protein is 3,4-dihydroxy-2-butanone 4-phosphate synthase.